The following is a 92-amino-acid chain: Small nuclear ribonucleoprotein E (92 aa).

One can recognise a Sm domain in the interval 18–92; the sequence is INLIFRYLQN…NITLLQSVSN (75 aa).

It belongs to the snRNP Sm proteins family. In terms of assembly, core component of the spliceosomal U1, U2, U4 and U5 small nuclear ribonucleoproteins (snRNPs), the building blocks of the spliceosome. Most spliceosomal snRNPs contain a common set of Sm proteins, SNRPB, SNRPD1, SNRPD2, SNRPD3, SNRPE, SNRPF and SNRPG that assemble in a heptameric protein ring on the Sm site of the small nuclear RNA to form the core snRNP. Component of the U1 snRNP. The U1 snRNP is composed of the U1 snRNA and the 7 core Sm proteins SNRPB, SNRPD1, SNRPD2, SNRPD3, SNRPE, SNRPF and SNRPG, and at least three U1 snRNP-specific proteins SNRNP70/U1-70K, SNRPA/U1-A and SNRPC/U1-C. Component of the U4/U6-U5 tri-snRNP complex composed of the U4, U6 and U5 snRNAs and at least PRPF3, PRPF4, PRPF6, PRPF8, PRPF31, SNRNP200, TXNL4A, SNRNP40, SNRPB, SNRPD1, SNRPD2, SNRPD3, SNRPE, SNRPF, SNRPG, DDX23, CD2BP2, PPIH, SNU13, EFTUD2, SART1 and USP39, plus LSM2, LSM3, LSM4, LSM5, LSM6, LSM7 and LSM8. Component of the U7 snRNP complex, or U7 Sm protein core complex, that is composed of the U7 snRNA and at least LSM10, LSM11, SNRPB, SNRPD3, SNRPE, SNRPF and SNRPG; the complex does not contain SNRPD1 and SNRPD2. Component of the minor spliceosome, which splices U12-type introns. Part of the SMN-Sm complex that contains SMN1, GEMIN2/SIP1, DDX20/GEMIN3, GEMIN4, GEMIN5, GEMIN6, GEMIN7, GEMIN8, STRAP/UNRIP and the Sm proteins SNRPB, SNRPD1, SNRPD2, SNRPD3, SNRPE, SNRPF and SNRPG; catalyzes core snRNPs assembly. Forms a 6S pICln-Sm complex composed of CLNS1A/pICln, SNRPD1, SNRPD2, SNRPE, SNRPF and SNRPG; ring-like structure where CLNS1A/pICln mimics additional Sm proteins and which is unable to assemble into the core snRNP. Interacts with SMN1; the interaction is direct. Interacts with GEMIN2 (via N-terminus); the interaction is direct. Interacts with SNRPF; the interaction is direct. Interacts with SNRPG; the interaction is direct.

It is found in the cytoplasm. Its subcellular location is the cytosol. It localises to the nucleus. Plays a role in pre-mRNA splicing as a core component of the spliceosomal U1, U2, U4 and U5 small nuclear ribonucleoproteins (snRNPs), the building blocks of the spliceosome. Component of both the pre-catalytic spliceosome B complex and activated spliceosome C complexes. As a component of the minor spliceosome, involved in the splicing of U12-type introns in pre-mRNAs. As part of the U7 snRNP it is involved in histone 3'-end processing. The polypeptide is Small nuclear ribonucleoprotein E (SNRPE) (Bos taurus (Bovine)).